The primary structure comprises 378 residues: Zinc transporter 7 (378 aa).

At 1–37 the chain is on the cytoplasmic side; sequence MLPLSIKDDEYKPPKFNLFGKISGWFRSILSDKTSRN. The chain crosses the membrane as a helical span at residues 38-58; the sequence is LFFFLCLNLSFAFVELLYGIW. Residues 59 to 67 lie on the Lumenal side of the membrane; sequence SNCLGLISD. A helical transmembrane segment spans residues 68-88; that stretch reads SFHMFFDSTAILAGLAASVIS. Over 89-102 the chain is Cytoplasmic; that stretch reads KWRDNDAFSYGYVR. The helical transmembrane segment at 103–123 threads the bilayer; sequence AEVLAGFVNGLFLIFTAFFIF. At 124 to 140 the chain is on the lumenal side; that stretch reads SEGVERALAPPDVHHER. A helical membrane pass occupies residues 141–161; it reads LLLVSILGFVVNLVGIFVFNH. Residues 161–220 form a his-rich loop region; the sequence is HGGHGHSHGSGHGHSHSLFNGALDHSHGHEDHCHSHGAKHGGAHSHDHDHAHGHGHLHSH. Topologically, residues 162–238 are cytoplasmic; the sequence is GGHGHSHGSG…AGPSRQILQG (77 aa). The disordered stretch occupies residues 186-228; the sequence is SHGHEDHCHSHGAKHGGAHSHDHDHAHGHGHLHSHDGPSFKET. Residues 204–224 are compositionally biased toward basic and acidic residues; the sequence is HSHDHDHAHGHGHLHSHDGPS. The helical transmembrane segment at 239-259 threads the bilayer; the sequence is VFLHILADTLGSIGVIASAIM. At 260 to 264 the chain is on the lumenal side; that stretch reads MQNFG. The helical transmembrane segment at 265 to 285 threads the bilayer; the sequence is LMIADPICSILIAILIVVSVI. The Cytoplasmic segment spans residues 286–378; sequence PLLRESIGIL…LYVQIDFAAM (93 aa).

It belongs to the cation diffusion facilitator (CDF) transporter (TC 2.A.4) family. SLC30A subfamily. As to quaternary structure, homooligomer.

The protein resides in the golgi apparatus membrane. Its subcellular location is the cytoplasmic vesicle. The protein localises to the golgi apparatus. It is found in the trans-Golgi network. It localises to the sarcoplasmic reticulum. The protein resides in the mitochondrion. The enzyme catalyses Zn(2+)(in) = Zn(2+)(out). In terms of biological role, zinc ion transporter mediating zinc entry from the cytosol into the lumen of organelles along the secretory pathway. By contributing to zinc ion homeostasis within the early secretory pathway, regulates the activation and folding of enzymes like alkaline phosphatases. The chain is Zinc transporter 7 from Rattus norvegicus (Rat).